The chain runs to 484 residues: Probable glycine dehydrogenase (decarboxylating) subunit 2 (484 aa).

Lys-264 bears the N6-(pyridoxal phosphate)lysine mark.

Belongs to the GcvP family. C-terminal subunit subfamily. As to quaternary structure, the glycine cleavage system is composed of four proteins: P, T, L and H. In this organism, the P 'protein' is a heterodimer of two subunits. Requires pyridoxal 5'-phosphate as cofactor.

It carries out the reaction N(6)-[(R)-lipoyl]-L-lysyl-[glycine-cleavage complex H protein] + glycine + H(+) = N(6)-[(R)-S(8)-aminomethyldihydrolipoyl]-L-lysyl-[glycine-cleavage complex H protein] + CO2. In terms of biological role, the glycine cleavage system catalyzes the degradation of glycine. The P protein binds the alpha-amino group of glycine through its pyridoxal phosphate cofactor; CO(2) is released and the remaining methylamine moiety is then transferred to the lipoamide cofactor of the H protein. The chain is Probable glycine dehydrogenase (decarboxylating) subunit 2 from Legionella pneumophila subsp. pneumophila (strain Philadelphia 1 / ATCC 33152 / DSM 7513).